The sequence spans 345 residues: Putative mediator of RNA polymerase II transcription subunit 7 (345 aa).

Low complexity-rich tracts occupy residues 1-27 (MNTS…TPQQ) and 88-126 (NNNN…NNNN). 2 disordered regions span residues 1–130 (MNTS…KATT) and 292–315 (TPLP…NNSQ).

It belongs to the Mediator complex subunit 7 family. Component of the Mediator complex.

It is found in the nucleus. In terms of biological role, component of the Mediator complex, a coactivator involved in the regulated transcription of nearly all RNA polymerase II-dependent genes. Mediator functions as a bridge to convey information from gene-specific regulatory proteins to the basal RNA polymerase II transcription machinery. Mediator is recruited to promoters by direct interactions with regulatory proteins and serves as a scaffold for the assembly of a functional preinitiation complex with RNA polymerase II and the general transcription factors. This Dictyostelium discoideum (Social amoeba) protein is Putative mediator of RNA polymerase II transcription subunit 7 (med7).